The primary structure comprises 350 residues: ADP-ribose pyrophosphatase, mitochondrial (350 aa).

The N-terminal 46 residues, 1–46, are a transit peptide targeting the mitochondrion; that stretch reads MAGRSLGKAVATVSLSVALASVTVRSSGCRAIPAPRNPFPSCGFHL. Disordered stretches follow at residues 53 to 77 and 116 to 153; these read GSNG…KVER and SESS…PAGR. A Phosphoserine modification is found at Ser-121. Residues 124–135 show a composition bias toward basic and acidic residues; the sequence is FNEKDGHVERKS. The 157-residue stretch at 178–334 folds into the Nudix hydrolase domain; sequence WKRDESGNKI…SQFIKLVAEK (157 aa). Positions 215–237 match the Nudix box motif; sequence GMVDPGEKISATLKREFGEEALN.

Belongs to the Nudix hydrolase family. NudF subfamily. As to quaternary structure, monomer. Interacts with GLOD4. Mg(2+) is required as a cofactor. Mn(2+) serves as cofactor.

It localises to the mitochondrion. The enzyme catalyses ADP-D-ribose + H2O = D-ribose 5-phosphate + AMP + 2 H(+). In terms of biological role, hydrolyzes ADP-ribose (ADPR) to AMP and ribose 5'-phosphate. This Rattus norvegicus (Rat) protein is ADP-ribose pyrophosphatase, mitochondrial (Nudt9).